Reading from the N-terminus, the 44-residue chain is Photosystem I reaction center subunit IX (44 aa).

Residues 7–27 (YLSTAPVLTTLWFGSLAGLLI) form a helical membrane-spanning segment.

Belongs to the PsaJ family.

It localises to the plastid. Its subcellular location is the chloroplast thylakoid membrane. In terms of biological role, may help in the organization of the PsaE and PsaF subunits. This chain is Photosystem I reaction center subunit IX, found in Phalaenopsis aphrodite subsp. formosana (Moth orchid).